A 548-amino-acid polypeptide reads, in one-letter code: Undecaprenyl phosphate-alpha-4-amino-4-deoxy-L-arabinose arabinosyl transferase 1 (548 aa).

The next 12 membrane-spanning stretches (helical) occupy residues 11–31 (WLLF…TRLL), 89–109 (IVVV…AMVV), 114–134 (ALAF…AIGT), 137–157 (ILDP…LVAL), 180–200 (FLTK…VMAI), 214–234 (IALL…ALQA), 263–283 (FYIP…FGAL), 292–312 (GTLY…ASKG), 314–334 (LLTY…HYIE), 347–367 (VNAS…IYSL), 382–402 (KIVL…GALF), and 405–425 (TQFL…YAIP).

The protein belongs to the glycosyltransferase 83 family.

It is found in the cell inner membrane. It carries out the reaction 4-amino-4-deoxy-alpha-L-arabinopyranosyl di-trans,octa-cis-undecaprenyl phosphate + lipid IVA = lipid IIA + di-trans,octa-cis-undecaprenyl phosphate.. It functions in the pathway lipopolysaccharide metabolism; 4-amino-4-deoxy-beta-L-arabinose-lipid A biosynthesis. In terms of biological role, catalyzes the transfer of the L-Ara4N moiety of the glycolipid undecaprenyl phosphate-alpha-L-Ara4N to lipid A. The modified arabinose is attached to lipid A and is required for resistance to polymyxin and cationic antimicrobial peptides. The polypeptide is Undecaprenyl phosphate-alpha-4-amino-4-deoxy-L-arabinose arabinosyl transferase 1 (Proteus mirabilis (strain HI4320)).